The following is a 251-amino-acid chain: Derlin-1 (251 aa).

Ser-2 carries the N-acetylserine modification. The Cytoplasmic portion of the chain corresponds to 2 to 15 (SDIGDWFRSIPAIT). The helical transmembrane segment at 16–31 (RYWFAATVAVPLVGKL) threads the bilayer. Topologically, residues 32 to 69 (GLISPAYLFLWPEAFLYRFQIWRPITATFYFPVGPGTG) are lumenal. The helical transmembrane segment at 70 to 89 (FLYLVNLYFLYQYSTRLETG) threads the bilayer. The Cytoplasmic portion of the chain corresponds to 90 to 94 (AFDGR). Residues 95–115 (PADYLFMLLFNWICIVITGLA) form a helical membrane-spanning segment. Over 116-122 (MDMQLLM) the chain is Lumenal. Residues 123–137 (IPLIMSVLYVWAQLN) traverse the membrane as a helical segment. Residues 138 to 154 (RDMIVSFWFGTRFKACY) lie on the Cytoplasmic side of the membrane. Residues 155-166 (LPWVILGFNYII) traverse the membrane as a helical segment. Residues 167–170 (GGSV) lie on the Lumenal side of the membrane. Residues 171-189 (INELIGNLVGHLYFFLMFR) traverse the membrane as a helical segment. Over 190-251 (YPMDLGGRNF…WGQGFRLGDQ (62 aa)) the chain is Cytoplasmic. Ser-201 carries the post-translational modification Phosphoserine. At Thr-202 the chain carries Phosphothreonine. Ser-226 bears the Phosphoserine mark. The tract at residues 229–251 (RAADQNGGGGRHNWGQGFRLGDQ) is disordered. The short motif at 241–248 (NWGQGFRL) is the SHP-box element.

Belongs to the derlin family. In terms of assembly, homotetramer. The four subunits of the tetramer are arranged in a twofold symmetry. Forms heterooligomers with DERL2 and DERL3; binding to DERL3 is poorer than that between DERL2 and DERL3. Interacts (via SHP-box motif) with VCP. Interacts with AMFR, SELENOS, SEL1L, SELENOK and SYVN1, as well as with SEL1L-SYVN1 and VCP-SELENOS protein complexes; this interaction is weaker than that observed between DERL2 and these complexes. Interacts with NGLY1 and YOD1. Does not bind to EDEM1. Interacts with DNAJB9. Interacts with RNF103. Interacts with HM13. Interacts with XBP1 isoform 1 (via luminal/ectodomain domain); the interaction obviates the need for ectodomain shedding prior HM13/SPP-mediated XBP1 isoform 1 cleavage. Interacts with the signal recognition particle/SRP and the SRP receptor; in the process of endoplasmic reticulum stress-induced pre-emptive quality control. May interact with UBXN6. Interacts with ZFAND2B; probably through VCP. Interacts with CCDC47. Interacts with C18orf32. May interact with TRAM1. Forms a complex with SVIP and VCP/p97. (Microbial infection) Interacts with the cytomegalovirus US11 protein. As to expression, ubiquitous.

The protein localises to the endoplasmic reticulum membrane. In terms of biological role, functional component of endoplasmic reticulum-associated degradation (ERAD) for misfolded lumenal proteins. Forms homotetramers which encircle a large channel traversing the endoplasmic reticulum (ER) membrane. This allows the retrotranslocation of misfolded proteins from the ER into the cytosol where they are ubiquitinated and degraded by the proteasome. The channel has a lateral gate within the membrane which provides direct access to membrane proteins with no need to reenter the ER lumen first. May mediate the interaction between VCP and the misfolded protein. Also involved in endoplasmic reticulum stress-induced pre-emptive quality control, a mechanism that selectively attenuates the translocation of newly synthesized proteins into the endoplasmic reticulum and reroutes them to the cytosol for proteasomal degradation. By controlling the steady-state expression of the IGF1R receptor, indirectly regulates the insulin-like growth factor receptor signaling pathway. Functionally, (Microbial infection) In case of infection by cytomegaloviruses, it plays a central role in the export from the ER and subsequent degradation of MHC class I heavy chains via its interaction with US11 viral protein, which recognizes and associates with MHC class I heavy chains. Also participates in the degradation process of misfolded cytomegalovirus US2 protein. This Homo sapiens (Human) protein is Derlin-1.